The sequence spans 212 residues: Nodulation protein NolU (212 aa).

In terms of biological role, regulates cultivar-specific nodulation of soybean. This Rhizobium fredii (Sinorhizobium fredii) protein is Nodulation protein NolU (nolU).